The sequence spans 844 residues: 3',5'-cyclic-AMP phosphodiesterase 4A (844 aa).

Residues 1–124 form a disordered region; the sequence is MEPPAAPSER…RSPLDSQASP (124 aa). Residue serine 13 is modified to Phosphoserine. A compositionally biased stretch (low complexity) spans 36–46; sequence QPRTPIRIQQR. Over residues 51–78 the composition is skewed to basic and acidic residues; the sequence is SAERSETERSPHRPIERADAVDTGDRPG. Residues 82 to 91 show a composition bias toward polar residues; it reads TRMSWPSSFH. Phosphoserine; by MAPKAPK2 is present on serine 147. Residues serine 152, serine 160, and serine 204 each carry the phosphoserine modification. Positions 296–317 are disordered; it reads PSPTPRQRAFQQPPPSVLRQSQ. Serine 333 carries the post-translational modification Phosphoserine. The region spanning 343-672 is the PDEase domain; it reads VKTDQEDLLA…DWYHSAIRQS (330 aa). A Glycyl lysine isopeptide (Lys-Gly) (interchain with G-Cter in SUMO) cross-link involves residue lysine 344. Histidine 419 (proton donor) is an active-site residue. 3',5'-cyclic AMP is bound at residue histidine 419. AMP is bound by residues histidine 419 and histidine 423. 4 residues coordinate Zn(2+): histidine 423, histidine 459, aspartate 460, and aspartate 577. AMP-binding residues include aspartate 460, aspartate 577, glutamine 628, and phenylalanine 631. Aspartate 460 contributes to the Mg(2+) binding site. Aspartate 460 lines the Mn(2+) pocket. The 3',5'-cyclic AMP site is built by glutamine 628 and phenylalanine 631. Disordered regions lie at residues 668-690 and 818-844; these read AIRQ…PSLP and SACS…GDPA. Serine 672 and serine 674 each carry phosphoserine. Over residues 820–830 the composition is skewed to polar residues; the sequence is CSGTSGDNSAI.

The protein belongs to the cyclic nucleotide phosphodiesterase family. PDE4 subfamily. As to quaternary structure, interacts with LYN (via SH3 domain). Interacts with ARRB2. The cofactor is Zn(2+). Requires Mg(2+) as cofactor. Mn(2+) serves as cofactor. Post-translationally, phosphorylated by MAPKAPK2 at Ser-147; it counteracts PKA-induced activation of PDE4A and modulates intracellular cAMP levels. Likely involved in cellular desensitization to cAMP signaling. Proteolytically cleaved by CASP3. As to expression, isoform 2 is testis specific.

It localises to the cytoplasm. The protein resides in the cytosol. The protein localises to the membrane. The catalysed reaction is 3',5'-cyclic AMP + H2O = AMP + H(+). The protein operates within purine metabolism; 3',5'-cyclic AMP degradation; AMP from 3',5'-cyclic AMP: step 1/1. Its activity is regulated as follows. Inhibited by rolipram. Its function is as follows. Hydrolyzes the second messenger 3',5'-cyclic AMP (cAMP), which is a key regulator of many important physiological processes. Efficiently hydrolyzes cAMP. This is 3',5'-cyclic-AMP phosphodiesterase 4A (Pde4a) from Rattus norvegicus (Rat).